The sequence spans 486 residues: Keratin-3, type I cytoskeletal 51 kDa (486 aa).

Residues 1 to 125 (MSNYSIKQSA…AGGMDIFSTN (125 aa)) are head. The tract at residues 126 to 161 (EKQTMQNLNDRLASYLDKVHALETANTELERKIKEW) is coil 1A. Residues 126 to 442 (EKQTMQNLND…RLLDGDLSKP (317 aa)) enclose the IF rod domain. The tract at residues 162–184 (YEKQRPGSSSGDGAKDYSKYYTM) is linker 1. Residues 185–276 (INDLKNQIIA…KNHEDELKGM (92 aa)) are coil 1B. The segment at 277-299 (QVTQVGQVNVEMNAAPSSDLTKI) is linker 12. The interval 300-438 (LNDMRSQYED…ETYRRLLDGD (139 aa)) is coil 2. The segment at 435–466 (LDGDLSKPKSGGGTSTNTGSTSSKGSTRTVKR) is disordered. A tail region spans residues 439 to 486 (LSKPKSGGGTSTNTGSTSSKGSTRTVKRREIIEEVVDGKVVSTKVVDM). Positions 449–461 (STNTGSTSSKGST) are enriched in low complexity.

It belongs to the intermediate filament family. Heterotetramer of two type I and two type II keratins.

In Xenopus laevis (African clawed frog), this protein is Keratin-3, type I cytoskeletal 51 kDa.